The following is a 299-amino-acid chain: MTEHKSGFVSIIGRPNVGKSTFVNRVIGHKIAIMSDKAQTTRNKIQGVMTRDDAQIIFIDTPGIHKPKHKLGDYMMKVAKNTLSEIDAIMFMVNANEEIGRGDEYIIEMLKNVKTPVFLVLNKIDLVHPDELMPKIEEYQSYMDFTEIVPISALDGLNVDHFIDVLKTYLPEGPKYYPDDQISDHPEQFVVGEIIREKILHLTSEEIPHAIGVNVDRMVKESEDRVHIEATIYVERDSQKGIVIGKGGKKLKEVGKRARRDIEMLLGSKVYLELWVKVQRDWRNKVNFIRQIGYVEDQD.

Residues 5-172 form the Era-type G domain; the sequence is KSGFVSIIGR…IDVLKTYLPE (168 aa). The tract at residues 13–20 is G1; the sequence is GRPNVGKS. A GTP-binding site is contributed by 13-20; it reads GRPNVGKS. The segment at 39–43 is G2; the sequence is QTTRN. A G3 region spans residues 60-63; that stretch reads DTPG. Residues 60-64 and 122-125 contribute to the GTP site; these read DTPGI and NKID. The G4 stretch occupies residues 122–125; it reads NKID. Residues 151-153 are G5; sequence ISA. The 78-residue stretch at 203–280 folds into the KH type-2 domain; the sequence is TSEEIPHAIG…YLELWVKVQR (78 aa).

The protein belongs to the TRAFAC class TrmE-Era-EngA-EngB-Septin-like GTPase superfamily. Era GTPase family. In terms of assembly, monomer.

Its subcellular location is the cytoplasm. It is found in the cell membrane. An essential GTPase that binds both GDP and GTP, with rapid nucleotide exchange. Plays a role in 16S rRNA processing and 30S ribosomal subunit biogenesis and possibly also in cell cycle regulation and energy metabolism. The sequence is that of GTPase Era from Staphylococcus aureus (strain bovine RF122 / ET3-1).